The chain runs to 514 residues: MQQLNPSEISELIRARIAGFEGRVETRSQGTIISLSDGILRIHGLEDVMYGEMLELPGGRFGLAMNLEQDNVGAVVLGEFSGLQEGDVVKCTGRVMQVPIGKALLGRVVNALGQPVDGKGAIDAEEFDVLEKIAPGVIDRQSVDEPMQTGIKSIDAMVPIGRGQRELIIGDRQTGKTAVAVDAILNQKGKDVQCIYVAIGQKASTVAGVVRKLEEYGAMEYTTVIAANASESAAMQYLAPYAGCTMGEYFRDRGMNALIVYDDLTKQAWAYRQISLLLRRPPGREAYPGDVFYLHSRLLERAARVNADFVEKFTKGEVKGKTGSLTALPIIETQAGDVSAFVPTNVISITDGQIYLETDLFNAGIRPAINAGLSVSRVGGAAQTKIIKKLGGGIRLDLAQYRELAAFAQFASDLDEITRKQIERGKRVTELLKQDQFSPMSVAEQGAALFAASSGALDDVEVANVRPFEKALLAYLNSNNKELMAGIEEKKDLTDDLKKQLDAAVKQFKSGSTY.

Residue 170-177 (GDRQTGKT) coordinates ATP.

It belongs to the ATPase alpha/beta chains family. F-type ATPases have 2 components, CF(1) - the catalytic core - and CF(0) - the membrane proton channel. CF(1) has five subunits: alpha(3), beta(3), gamma(1), delta(1), epsilon(1). CF(0) has three main subunits: a(1), b(2) and c(9-12). The alpha and beta chains form an alternating ring which encloses part of the gamma chain. CF(1) is attached to CF(0) by a central stalk formed by the gamma and epsilon chains, while a peripheral stalk is formed by the delta and b chains.

The protein resides in the cell inner membrane. The catalysed reaction is ATP + H2O + 4 H(+)(in) = ADP + phosphate + 5 H(+)(out). Functionally, produces ATP from ADP in the presence of a proton gradient across the membrane. The alpha chain is a regulatory subunit. The protein is ATP synthase subunit alpha of Acidithiobacillus ferrooxidans (strain ATCC 23270 / DSM 14882 / CIP 104768 / NCIMB 8455) (Ferrobacillus ferrooxidans (strain ATCC 23270)).